Consider the following 537-residue polypeptide: uncharacterized protein (537 aa).

6 consecutive transmembrane segments (helical) span residues 5-25 (IGLGLIHGLMYGIVPVAPWFV), 40-60 (LAVAGTIAGQVTLLALTFFGW), 63-83 (VLWVWYYFEPALIILGTMAVV), 115-135 (GLYYFLMSFGLMFCNPLHLEG), 149-169 (VYLLAFTVSYTAIIFIFWVTL), and 197-217 (VGIVAALFLQFANCTPEALVI).

It localises to the plastid. The protein resides in the chloroplast membrane. This is an uncharacterized protein from Ostreococcus tauri.